Here is a 520-residue protein sequence, read N- to C-terminus: FNIP repeat-containing protein DDB_G0274063/DDB_G0272642 (520 aa).

2 disordered regions span residues 47 to 86 and 100 to 121; these read QQQSNNNNNNNNNNNNNNNNNNFINFSNHTNNINNNIDNR and NISSSSPYTLTSTPSSSSSSSS. Over residues 51 to 84 the composition is skewed to low complexity; the sequence is NNNNNNNNNNNNNNNNNNFINFSNHTNNINNNID. FNIP repeat units follow at residues 242–285, 286–331, 332–406, and 453–496; these read YNNN…FGES, FNQD…FGLS, YNQP…FGVQ, and FNQQ…FHNS.

The protein is FNIP repeat-containing protein DDB_G0274063/DDB_G0272642 of Dictyostelium discoideum (Social amoeba).